The chain runs to 132 residues: Tyrosine phosphatase-like protein N2 (132 aa).

Residues 1–132 enclose the Tyrosine-protein phosphatase domain; sequence MQGPMKNTVA…DILGRFQRVF (132 aa).

It belongs to the protein-tyrosine phosphatase family.

The protein is Tyrosine phosphatase-like protein N2 (N4) of Microplitis demolitor (Parasitoid wasp).